Here is a 1707-residue protein sequence, read N- to C-terminus: Histone-lysine N-methyltransferase SETD1A (1707 aa).

The segment at 60-89 (LQDPRCHVRSKNRDFSLPVPKFKLDEFYIG) is interaction with WDR82. Residues 84-172 (DEFYIGQIPL…NIIHAQLDIK (89 aa)) form the RRM domain. Disordered stretches follow at residues 194–308 (PTGG…YQDA), 331–363 (TAATASSSASSSSLSSSSSSSSSSSSSQFRSSD), 381–486 (SYPP…AQHS), 506–655 (LASD…PPPH), 834–854 (AKPFQNAAKQQAKEEDKEKTK), 891–1251 (PSFK…GTEV), and 1264–1293 (ARRGLPALPAVEDSEATETSDEAERPRPLL). Over residues 239–277 (NGTPCSQDTSFSSSRQDTPSSFGQFTPQSSQGTPYTSRG) the composition is skewed to polar residues. 2 stretches are compositionally biased toward low complexity: residues 278 to 295 (STPYSQDSAYSSSTTSTS) and 331 to 357 (TAATASSSASSSSLSSSSSSSSSSSSS). The segment covering 430-440 (SEAPPPEPPEP) has biased composition (pro residues). Phosphoserine is present on residues Ser459 and Ser464. The segment covering 459–473 (SPRPASPARSGSPAP) has biased composition (low complexity). Residues 474 to 486 (ETTNESVPFAQHS) show a composition bias toward polar residues. Phosphoserine occurs at positions 508 and 565. Residues 568–578 (ANGQNQASPCS) are compositionally biased toward polar residues. 2 stretches are compositionally biased toward pro residues: residues 593–617 (SPPPAPTPPQQPPPPPPPPPPPPPY) and 624–655 (GYPPHQPAYLLPPRPDGPPPPEYPPPPPPPPH). The span at 844 to 854 (QAKEEDKEKTK) shows a compositional bias: basic and acidic residues. Ser915 bears the Phosphoserine mark. Composition is skewed to acidic residues over residues 918–927 (AEEDEDDPEQ) and 976–992 (KDEEDDEEDEEDEDREE). Residues 993–1002 (AVDTTKKETE) show a composition bias toward basic and acidic residues. Positions 1003 to 1012 (VSDGEDEESD) are enriched in acidic residues. Positions 1032–1060 (DSESSSSSSSSSSSSSSSSSSSSSSSSES) are enriched in low complexity. Pro residues predominate over residues 1077 to 1094 (ASPPPREVPVPTPAPVEV). Ser1103 is subject to Phosphoserine. Over residues 1127–1145 (PSAPLRPPEPPAGPPAPAP) the composition is skewed to pro residues. The segment covering 1275-1284 (EDSEATETSD) has biased composition (acidic residues). The HCFC1-binding motif (HBM) signature appears at 1299 to 1303 (EHNYA). Disordered regions lie at residues 1307 to 1417 (KPTP…AYEP) and 1472 to 1499 (NLTTPKRKRRPQDGPREHQTGSARSEGY). Pro residues predominate over residues 1308–1323 (PTPPAPALRPPEPVPA). Over residues 1360 to 1377 (EGEEEGEEEGEEEEEESS) the composition is skewed to acidic residues. A compositionally biased stretch (basic residues) spans 1390–1403 (RRRSLRSHARRRRP). Positions 1404 to 1414 (PPPPPPPPPRA) are enriched in pro residues. Residues 1415–1450 (YEPRSEFEQMTILYDIWNSGLDSEDMSYLRLTYERL) form an interaction with CFP1 region. The interaction with ASH2L, RBBP5 and WDR5 stretch occupies residues 1450 to 1537 (LLQQTSGADW…GTNRVLSERR (88 aa)). Residues 1492–1497 (GSARSE) carry the WDR5 interaction motif (WIN) motif. The RxxxRR motif motif lies at 1537–1542 (RSEQRR). Residues 1568 to 1685 (KKLRFGRSRI…VDEEITYDYK (118 aa)) enclose the SET domain. Tyr1684 provides a ligand contact to S-adenosyl-L-methionine. The Post-SET domain maps to 1691-1707 (NKIPCLCGTESCRGSLN).

Belongs to the class V-like SAM-binding methyltransferase superfamily. As to quaternary structure, component of the SET1A/COMPASS complex composed of the catalytic subunit SETD1A, WDR5, WDR82, RBBP5, ASH2L/ASH2, CXXC1/CFP1, HCFC1 and DPY30 homotrimer. Forms a core complex with the evolutionary conserved subcomplex WRAD composed of WDR5, RBBP5, ASH2L/ASH2 and DPY30 subunits; WRAD differentially stimulates the methyltransferase activity. Interacts with BOD1L1 (via COMPASS-Shg1 domain) at replication forks. Interacts with HCFC1. Interacts with ASH2/ASH2L. Interacts with CXXC1/CFP1. Interacts with RBBP5. Interacts (via N-terminal region) with WDR82; the interaction is direct. Interacts (via the RRM domain) with hyperphosphorylated C-terminal domain (CTD) of RNA polymerase II large subunit (POLR2A) only in the presence of WDR82. Binds specifically to CTD heptad repeats phosphorylated on 'Ser-5' of each heptad. Interacts with ZNF335. Interacts with SUPT6H. Interacts with NAP1L1. Interacts (via WIN motif) with WDR5.

It localises to the nucleus speckle. Its subcellular location is the chromosome. It is found in the cytoplasm. It catalyses the reaction L-lysyl(4)-[histone H3] + S-adenosyl-L-methionine = N(6)-methyl-L-lysyl(4)-[histone H3] + S-adenosyl-L-homocysteine + H(+). The catalysed reaction is N(6)-methyl-L-lysyl(4)-[histone H3] + S-adenosyl-L-methionine = N(6),N(6)-dimethyl-L-lysyl(4)-[histone H3] + S-adenosyl-L-homocysteine + H(+). The enzyme catalyses N(6),N(6)-dimethyl-L-lysyl(4)-[histone H3] + S-adenosyl-L-methionine = N(6),N(6),N(6)-trimethyl-L-lysyl(4)-[histone H3] + S-adenosyl-L-homocysteine + H(+). Histone methyltransferase that catalyzes methyl group transfer from S-adenosyl-L-methionine to the epsilon-amino group of 'Lys-4' of histone H3 (H3K4) via a non-processive mechanism. Part of chromatin remodeling machinery, forms H3K4me1, H3K4me2 and H3K4me3 methylation marks at active chromatin sites where transcription and DNA repair take place. Responsible for H3K4me3 enriched promoters and transcriptional programming of inner mass stem cells and neuron progenitors during embryogenesis. Required for H3K4me1 mark at stalled replication forks. Mediates FANCD2-dependent nucleosome remodeling and RAD51 nucleofilaments stabilization at reversed forks, protecting them from nucleolytic degradation. Does not methylate 'Lys-4' of histone H3 if the neighboring 'Lys-9' residue is already methylated. Binds RNAs involved in RNA processing and the DNA damage response. This Homo sapiens (Human) protein is Histone-lysine N-methyltransferase SETD1A (SETD1A).